A 48-amino-acid polypeptide reads, in one-letter code: Keratin-associated protein 22-1 (48 aa).

As to quaternary structure, interacts with hair keratins.

In terms of biological role, in the hair cortex, hair keratin intermediate filaments are embedded in an interfilamentous matrix, consisting of hair keratin-associated proteins (KRTAP), which are essential for the formation of a rigid and resistant hair shaft through their extensive disulfide bond cross-linking with abundant cysteine residues of hair keratins. The matrix proteins include the high-sulfur and high-glycine-tyrosine keratins. This Homo sapiens (Human) protein is Keratin-associated protein 22-1 (KRTAP22-1).